Here is a 121-residue protein sequence, read N- to C-terminus: Large ribosomal subunit protein uL14 (121 aa).

Belongs to the universal ribosomal protein uL14 family. As to quaternary structure, part of the 50S ribosomal subunit. Forms a cluster with proteins L3 and L19. In the 70S ribosome, L14 and L19 interact and together make contacts with the 16S rRNA in bridges B5 and B8.

In terms of biological role, binds to 23S rRNA. Forms part of two intersubunit bridges in the 70S ribosome. The polypeptide is Large ribosomal subunit protein uL14 (Parasynechococcus marenigrum (strain WH8102)).